The chain runs to 205 residues: Small ribosomal subunit protein uS4 (205 aa).

The tract at residues 18–46 (NIWGRPKSPVNRREYGPGQHGQRRKGKLS) is disordered. In terms of domain architecture, S4 RNA-binding spans 94 to 157 (RRLDTVVYRA…KQLAFVLEAS (64 aa)).

The protein belongs to the universal ribosomal protein uS4 family. Part of the 30S ribosomal subunit. Contacts protein S5. The interaction surface between S4 and S5 is involved in control of translational fidelity.

One of the primary rRNA binding proteins, it binds directly to 16S rRNA where it nucleates assembly of the body of the 30S subunit. Functionally, with S5 and S12 plays an important role in translational accuracy. The polypeptide is Small ribosomal subunit protein uS4 (Rhodopseudomonas palustris (strain HaA2)).